The primary structure comprises 689 residues: Methionine--tRNA ligase (689 aa).

Positions 15–25 match the 'HIGH' region motif; the sequence is PYANGPIHLGH. C146, C149, C159, and C162 together coordinate Zn(2+). Residues 332-336 carry the 'KMSKS' region motif; it reads KMSKS. K335 lines the ATP pocket. The 102-residue stretch at 588 to 689 folds into the tRNA-binding domain; it reads DFAKIDLRIA…EGAQPGMRVK (102 aa).

Belongs to the class-I aminoacyl-tRNA synthetase family. MetG type 1 subfamily. In terms of assembly, homodimer. The cofactor is Zn(2+).

Its subcellular location is the cytoplasm. The enzyme catalyses tRNA(Met) + L-methionine + ATP = L-methionyl-tRNA(Met) + AMP + diphosphate. Functionally, is required not only for elongation of protein synthesis but also for the initiation of all mRNA translation through initiator tRNA(fMet) aminoacylation. This is Methionine--tRNA ligase from Shewanella baltica (strain OS223).